Here is a 262-residue protein sequence, read N- to C-terminus: ABSCISIC ACID-INSENSITIVE 5-like protein 3 (262 aa).

Phosphoserine occurs at positions 21, 43, and 66. Thr104 is modified (phosphothreonine). The bZIP domain maps to 190 to 253 (VERRQKRMIK…SEPPPDPKWK (64 aa)). The segment at 192–211 (RRQKRMIKNRESAARSRARK) is basic motif. A leucine-zipper region spans residues 218 to 232 (LEIKVSRLEEENEKL). Residues 239–252 (EKILPSEPPPDPKW) are compositionally biased toward basic and acidic residues. Positions 239–262 (EKILPSEPPPDPKWKLRRTNSASL) are disordered.

It belongs to the bZIP family. ABI5 subfamily. As to quaternary structure, DNA-binding heterodimer with ABI5/DPBF1, DPBF2 or AREB3/DPBF3. Interacts with the AFP proteins AFP2, AFP3 and AFP4. Predominantly expressed in seeds.

Its subcellular location is the nucleus. Functionally, binds to the embryo specification element and the ABA-responsive element (ABRE) of the Dc3 gene promoter and to the ABRE of the Em1 gene promoter. Could participate in abscisic acid-regulated gene expression during seed development. This chain is ABSCISIC ACID-INSENSITIVE 5-like protein 3 (DPBF4), found in Arabidopsis thaliana (Mouse-ear cress).